We begin with the raw amino-acid sequence, 529 residues long: Bifunctional purine biosynthesis protein PurH (529 aa).

The region spanning 2 to 149 is the MGS-like domain; it reads TNLVPVGRAL…KNHRFVNVVT (148 aa).

Belongs to the PurH family.

It catalyses the reaction (6R)-10-formyltetrahydrofolate + 5-amino-1-(5-phospho-beta-D-ribosyl)imidazole-4-carboxamide = 5-formamido-1-(5-phospho-D-ribosyl)imidazole-4-carboxamide + (6S)-5,6,7,8-tetrahydrofolate. It carries out the reaction IMP + H2O = 5-formamido-1-(5-phospho-D-ribosyl)imidazole-4-carboxamide. It participates in purine metabolism; IMP biosynthesis via de novo pathway; 5-formamido-1-(5-phospho-D-ribosyl)imidazole-4-carboxamide from 5-amino-1-(5-phospho-D-ribosyl)imidazole-4-carboxamide (10-formyl THF route): step 1/1. The protein operates within purine metabolism; IMP biosynthesis via de novo pathway; IMP from 5-formamido-1-(5-phospho-D-ribosyl)imidazole-4-carboxamide: step 1/1. This Cereibacter sphaeroides (strain ATCC 17025 / ATH 2.4.3) (Rhodobacter sphaeroides) protein is Bifunctional purine biosynthesis protein PurH.